Here is a 62-residue protein sequence, read N- to C-terminus: Small acidic protein 1 (62 aa).

Interacts with the COP9 signalosome. As to expression, expressed in roots, flowers, siliques, stems, leaves and seeds. In flowers, detected in petals, anthers and pistils.

Its function is as follows. Mediates responses to the synthetic auxin 2,4-dichlorophenoxyacetic acid (2,4-D). Not involved in the response to indole-3-acetic acid (IAA). Interacts with RUB modification-related components and may regulate the cullin-ring ubiquitin E3 ligase complex (CRL) activity. The protein is Small acidic protein 1 (SMAP1) of Arabidopsis thaliana (Mouse-ear cress).